We begin with the raw amino-acid sequence, 1356 residues long: Probable aldehyde oxidase 3 (1356 aa).

A 2Fe-2S ferredoxin-type domain is found at 10 to 97; that stretch reads RAVVVAVNGE…HCAVTTSEGI (88 aa). 4 residues coordinate [2Fe-2S] cluster: cysteine 49, cysteine 54, cysteine 57, and cysteine 79. The FAD-binding PCMH-type domain occupies 245–437; the sequence is VVVTGDGWFH…TFQTFRAAPR (193 aa). The interval 552–576 is disordered; sequence NGSFTNGTANGIVDSSPEKHSNVDS.

It belongs to the xanthine dehydrogenase family. As to quaternary structure, aldehyde oxidases (AO) are homodimers and heterodimers of AO subunits. Requires [2Fe-2S] cluster as cofactor. It depends on FAD as a cofactor. Mo-molybdopterin is required as a cofactor.

It carries out the reaction an aldehyde + O2 + H2O = a carboxylate + H2O2 + H(+). This is Probable aldehyde oxidase 3 from Oryza sativa subsp. japonica (Rice).